A 123-amino-acid chain; its full sequence is Large ribosomal subunit protein bL12 (123 aa).

It belongs to the bacterial ribosomal protein bL12 family. In terms of assembly, homodimer. Part of the ribosomal stalk of the 50S ribosomal subunit. Forms a multimeric L10(L12)X complex, where L10 forms an elongated spine to which 2 to 4 L12 dimers bind in a sequential fashion. Binds GTP-bound translation factors.

Forms part of the ribosomal stalk which helps the ribosome interact with GTP-bound translation factors. Is thus essential for accurate translation. This chain is Large ribosomal subunit protein bL12, found in Geobacillus kaustophilus (strain HTA426).